A 68-amino-acid polypeptide reads, in one-letter code: Pleurocidin (68 aa).

The N-terminal stretch at 1–22 is a signal peptide; that stretch reads MKFTATFLMMAIFVLMVEPGEC. Residues 48 to 68 constitute a propeptide that is removed on maturation; the sequence is GDKQELNKRAVDEDPNVIVFE.

It belongs to the pleurocidin family. In terms of tissue distribution, goblet cells.

It is found in the secreted. The protein resides in the membrane. In terms of biological role, antimicrobial peptide with potent activity against Gram-positive and Gram-negative bacteria. Activity against E.coli and B.subtilis. Weaker activity against L.mucor, s.marcescens and P.aeruginosa. May play a role in innate host defense. This Pseudopleuronectes americanus (Winter flounder) protein is Pleurocidin (ple1).